Here is a 618-residue protein sequence, read N- to C-terminus: tRNA endonuclease vms-1 (618 aa).

A C2H2-type zinc finger spans residues 59 to 85; that stretch reads DQCTTCNCPVDFGDRAVLLEHYQSLFH. A VLRF1 domain is found at 170-311; it reads RPFDCAIFLW…SDCWQRLQQV (142 aa). Residue Gln-213 is part of the active site. 2 ANK repeats span residues 437-466 and 470-496; these read NRST…CDSS and GAGL…VKNE. The tract at residues 502 to 539 is disordered; sequence ARTHIPEPKKKVELTEEQEREQAERKKEKKARQKEKEK. Basic and acidic residues predominate over residues 505–515; that stretch reads HIPEPKKKVEL. Residues 510–557 are a coiled coil; that stretch reads KKKVELTEEQEREQAERKKEKKARQKEKEKLKKEIAKRDVEEMEERQK.

The protein belongs to the ANKZF1/VMS1 family. In larval stages and in adults, expressed in intestinal cells, specific neurons in the head and the tail, and in the ventral nerve cord.

It is found in the cytoplasm. Its subcellular location is the mitochondrion. Its function is as follows. Endonuclease that cleaves polypeptidyl-tRNAs downstream of the ribosome-associated quality control (RQC) pathway to release incompletely synthesized polypeptides for degradation. The RQC pathway disassembles aberrantly stalled translation complexes to recycle or degrade the constituent parts. Dispensable for viability and growth but is required for protection against oxidative stress and for wild-type life span. This chain is tRNA endonuclease vms-1 (vms-1), found in Caenorhabditis elegans.